The chain runs to 1182 residues: CRISPR-associated endoribonuclease Cas13a (1182 aa).

Positions 132–279 (FNNLIEKVQN…ENNSDNKLKQ (148 aa)) form a coiled coil. The interval 366-508 (YIKNTGQLET…NNEEIKGYFI (143 aa)) is HEPN-like fold 1. Positions 896–955 (KVEKENIEDYNKKEEIEQKKKSNIEKLQDLKVELHKKWEQNKITEKEIEKYNNTTRKINE) form a coiled coil. An HEPN-like fold 2 region spans residues 965 to 1120 (LQNVYLLHEM…QNHILKSTKT (156 aa)).

This sequence belongs to the CRISPR-associated endoribonuclease Cas13a family. It depends on a divalent metal cation as a cofactor.

Its activity is regulated as follows. Target RNA acts as an activator for non-specific ssRNA degradation. Functionally, CRISPR (clustered regularly interspaced short palindromic repeat), is an adaptive immune system that provides protection against mobile genetic elements (viruses, transposable elements and conjugative plasmids). CRISPR clusters contain sequences complementary to antecedent mobile elements and target invading nucleic acids. Unlike many single-component effectors, this CRISPR-Cas system targets RNA. CRISPR clusters are transcribed from pre-CRISPR RNA (crRNA) and processed into crRNA by this protein. Cleaves linear target ssRNA in a pre-crRNA-dependent fashion, preferentially before U residues. Binding a viable target RNA target activates this protein for non-specific RNA degradation in vitro (called collateral RNA degradation), which is fairly sensitive as it requires picomolar levels of viable target RNA. This is CRISPR-associated endoribonuclease Cas13a from Leptotrichia wadei (strain F0279).